We begin with the raw amino-acid sequence, 146 residues long: uncharacterized protein (146 aa).

Residues 86–96 (EFDSPMDEEEE) show a composition bias toward acidic residues. Positions 86–124 (EFDSPMDEEEETKPREASLDQTAPKKSKKEELLVKNNNF) are disordered.

This is an uncharacterized protein from Ostreid herpesvirus 1 (isolate France) (OsHV-1).